A 484-amino-acid polypeptide reads, in one-letter code: Calcium-dependent protein kinase 31 (484 aa).

Glycine 2 carries N-myristoyl glycine lipidation. Residues 28 to 290 enclose the Protein kinase domain; the sequence is YILGDELGQG…AAEVLGHPWM (263 aa). ATP contacts are provided by residues 34-42 and lysine 57; that span reads LGQGQFGIT. The active-site Proton acceptor is the aspartate 156. Serine 196 carries the phosphoserine modification. Positions 295–325 are autoinhibitory domain; that stretch reads ASDKPIDGVVLSRLKQFRDMNKLKKVALKVI. 4 consecutive EF-hand domains span residues 332 to 367, 368 to 403, 404 to 439, and 444 to 474; these read EEIK…LGSN, LSKT…RYRL, DRDD…HGVG, and IKQI…GSSL. Ca(2+) is bound by residues aspartate 345, aspartate 347, serine 349, threonine 351, glutamate 356, aspartate 381, aspartate 383, asparagine 385, threonine 387, glutamate 392, aspartate 417, aspartate 419, aspartate 421, histidine 423, glutamate 428, aspartate 452, aspartate 454, aspartate 456, lysine 458, and glutamate 463.

It belongs to the protein kinase superfamily. Ser/Thr protein kinase family. CDPK subfamily.

It localises to the membrane. It carries out the reaction L-seryl-[protein] + ATP = O-phospho-L-seryl-[protein] + ADP + H(+). The catalysed reaction is L-threonyl-[protein] + ATP = O-phospho-L-threonyl-[protein] + ADP + H(+). Its activity is regulated as follows. Activated by calcium. Autophosphorylation may play an important role in the regulation of the kinase activity. Functionally, may play a role in signal transduction pathways that involve calcium as a second messenger. This is Calcium-dependent protein kinase 31 (CPK31) from Arabidopsis thaliana (Mouse-ear cress).